The following is a 552-amino-acid chain: Tyrosine-protein kinase Src64B (552 aa).

The 62-residue stretch at 95-156 (VLKRVVVALY…PLNFVAEERS (62 aa)) folds into the SH3 domain. Positions 162 to 259 (WFFENVLRKE…GLCHILSRPC (98 aa)) constitute an SH2 domain. Residues 284–537 (IQLLRKLGRG…TFEFLNHYFE (254 aa)) form the Protein kinase domain. ATP is bound by residues 290 to 298 (LGRGNFGEV) and Lys-312. Residue Asp-404 is the Proton acceptor of the active site. Position 434 is a phosphotyrosine; by autocatalysis (Tyr-434).

The protein belongs to the protein kinase superfamily. Tyr protein kinase family. SRC subfamily. Interacts with hzg. Post-translationally, phosphorylated. After the first 8 hours of development, accumulates almost exclusively in neural tissues such as the brain, ventral nerve chord, and eye-antennal disks, and in differentiating smooth muscle.

The catalysed reaction is L-tyrosyl-[protein] + ATP = O-phospho-L-tyrosyl-[protein] + ADP + H(+). Its function is as follows. Tyrosine-protein kinase that may play a role in the development of neural tissue and smooth muscle. May contribute to tyrosine phosphorylation of Dscam1, a cell surface receptor involved in targeting of growing axons during eye morphogenesis. In Drosophila melanogaster (Fruit fly), this protein is Tyrosine-protein kinase Src64B (Src64B).